Consider the following 435-residue polypeptide: NADH-quinone oxidoreductase subunit D 2 (435 aa).

This sequence belongs to the complex I 49 kDa subunit family. NDH-1 is composed of 14 different subunits. Subunits NuoB, C, D, E, F, and G constitute the peripheral sector of the complex.

Its subcellular location is the cell inner membrane. The catalysed reaction is a quinone + NADH + 5 H(+)(in) = a quinol + NAD(+) + 4 H(+)(out). NDH-1 shuttles electrons from NADH, via FMN and iron-sulfur (Fe-S) centers, to quinones in the respiratory chain. The immediate electron acceptor for the enzyme in this species is believed to be ubiquinone. Couples the redox reaction to proton translocation (for every two electrons transferred, four hydrogen ions are translocated across the cytoplasmic membrane), and thus conserves the redox energy in a proton gradient. This chain is NADH-quinone oxidoreductase subunit D 2, found in Stenotrophomonas maltophilia (strain R551-3).